Consider the following 288-residue polypeptide: Bifunctional protein FolD (288 aa).

NADP(+)-binding positions include 166 to 168 (GAS) and Ile232.

Belongs to the tetrahydrofolate dehydrogenase/cyclohydrolase family. As to quaternary structure, homodimer.

It catalyses the reaction (6R)-5,10-methylene-5,6,7,8-tetrahydrofolate + NADP(+) = (6R)-5,10-methenyltetrahydrofolate + NADPH. It carries out the reaction (6R)-5,10-methenyltetrahydrofolate + H2O = (6R)-10-formyltetrahydrofolate + H(+). The protein operates within one-carbon metabolism; tetrahydrofolate interconversion. Catalyzes the oxidation of 5,10-methylenetetrahydrofolate to 5,10-methenyltetrahydrofolate and then the hydrolysis of 5,10-methenyltetrahydrofolate to 10-formyltetrahydrofolate. This Escherichia coli O8 (strain IAI1) protein is Bifunctional protein FolD.